The chain runs to 292 residues: 4-diphosphocytidyl-2-C-methyl-D-erythritol kinase (292 aa).

Lys-13 is an active-site residue. 97 to 107 (PVAAGLAGGSS) is an ATP binding site. Asp-139 is a catalytic residue.

It belongs to the GHMP kinase family. IspE subfamily.

It carries out the reaction 4-CDP-2-C-methyl-D-erythritol + ATP = 4-CDP-2-C-methyl-D-erythritol 2-phosphate + ADP + H(+). Its pathway is isoprenoid biosynthesis; isopentenyl diphosphate biosynthesis via DXP pathway; isopentenyl diphosphate from 1-deoxy-D-xylulose 5-phosphate: step 3/6. Its function is as follows. Catalyzes the phosphorylation of the position 2 hydroxy group of 4-diphosphocytidyl-2C-methyl-D-erythritol. The sequence is that of 4-diphosphocytidyl-2-C-methyl-D-erythritol kinase from Bacillus thuringiensis (strain Al Hakam).